A 153-amino-acid polypeptide reads, in one-letter code: 3-hydroxyacyl-[acyl-carrier-protein] dehydratase FabZ (153 aa).

H58 is an active-site residue.

This sequence belongs to the thioester dehydratase family. FabZ subfamily.

The protein resides in the cytoplasm. The catalysed reaction is a (3R)-hydroxyacyl-[ACP] = a (2E)-enoyl-[ACP] + H2O. Functionally, involved in unsaturated fatty acids biosynthesis. Catalyzes the dehydration of short chain beta-hydroxyacyl-ACPs and long chain saturated and unsaturated beta-hydroxyacyl-ACPs. This Bradyrhizobium diazoefficiens (strain JCM 10833 / BCRC 13528 / IAM 13628 / NBRC 14792 / USDA 110) protein is 3-hydroxyacyl-[acyl-carrier-protein] dehydratase FabZ.